The primary structure comprises 141 residues: Aspartate 1-decarboxylase 1 (141 aa).

Ser25 acts as the Schiff-base intermediate with substrate; via pyruvic acid in catalysis. A Pyruvic acid (Ser) modification is found at Ser25. Position 57 (Thr57) interacts with substrate. Catalysis depends on Tyr58, which acts as the Proton donor. Position 73–75 (73–75) interacts with substrate; the sequence is GPA.

Belongs to the PanD family. As to quaternary structure, heterooctamer of four alpha and four beta subunits. It depends on pyruvate as a cofactor. Is synthesized initially as an inactive proenzyme, which is activated by self-cleavage at a specific serine bond to produce a beta-subunit with a hydroxyl group at its C-terminus and an alpha-subunit with a pyruvoyl group at its N-terminus.

The protein localises to the cytoplasm. The enzyme catalyses L-aspartate + H(+) = beta-alanine + CO2. The protein operates within cofactor biosynthesis; (R)-pantothenate biosynthesis; beta-alanine from L-aspartate: step 1/1. In terms of biological role, catalyzes the pyruvoyl-dependent decarboxylation of aspartate to produce beta-alanine. This chain is Aspartate 1-decarboxylase 1, found in Paenarthrobacter aurescens (strain TC1).